The following is a 39-amino-acid chain: Photosystem II reaction center protein J (39 aa).

The helical transmembrane segment at 7–27 (IPLWLIATVGGTAALTVVGLF) threads the bilayer.

Belongs to the PsbJ family. PSII is composed of 1 copy each of membrane proteins PsbA, PsbB, PsbC, PsbD, PsbE, PsbF, PsbH, PsbI, PsbJ, PsbK, PsbL, PsbM, PsbT, PsbX, PsbY, PsbZ, Psb30/Ycf12, at least 3 peripheral proteins of the oxygen-evolving complex and a large number of cofactors. It forms dimeric complexes.

The protein resides in the plastid. It localises to the chloroplast thylakoid membrane. Its function is as follows. One of the components of the core complex of photosystem II (PSII). PSII is a light-driven water:plastoquinone oxidoreductase that uses light energy to abstract electrons from H(2)O, generating O(2) and a proton gradient subsequently used for ATP formation. It consists of a core antenna complex that captures photons, and an electron transfer chain that converts photonic excitation into a charge separation. The protein is Photosystem II reaction center protein J of Rhodomonas salina (Cryptomonas salina).